An 886-amino-acid polypeptide reads, in one-letter code: Neurotrophin 1 (886 aa).

The first 29 residues, 1-29, serve as a signal peptide directing secretion; it reads MKAGRAFGCLFWALLYCVLYLDLVSGNSA. The propeptide occupies 30 to 498; the sequence is DDELMDFDFA…FDDFSLSKKR (469 aa). N-linked (GlcNAc...) asparagine glycans are attached at residues asparagine 267 and asparagine 317. The segment at 321-340 is disordered; the sequence is FQQPSSQEEEKMASSNGGQS. An N-linked (GlcNAc...) asparagine glycan is attached at asparagine 353. Residues 369 to 436 are disordered; sequence RNSAEETEEP…HKPVVTPPNK (68 aa). In terms of domain architecture, Spaetzle spans 508–597; it reads MCQSVVRYAR…KVPTCCSCQV (90 aa). 3 disulfides stabilise this stretch: cysteine 509–cysteine 564, cysteine 546–cysteine 593, and cysteine 553–cysteine 595. Asparagine 623 is a glycosylation site (N-linked (GlcNAc...) asparagine). 2 disordered regions span residues 675–754 and 789–886; these read PGIS…QYHR and VSAP…QSIQ. A compositionally biased stretch (low complexity) spans 698–710; sequence YKSSSSSSKKYYS. Residues 797–807 are compositionally biased toward pro residues; it reads PAPPLPMPPMP. Basic residues-rich tracts occupy residues 815–827 and 874–886; these read HQAH…HHLH and SRRH…QSIQ.

In terms of assembly, homodimer; disulfide-linked. In terms of tissue distribution, detected in the fan-shaped body which is a component of the locomotion center in the central nervous system (CNS) (at protein level). Expressed in the optic lobes and brain.

Functionally, neurotrophin which may function as a ligand for the Toll-related receptors Toll-7 and Tollo. Binds to Toll-7 and probably acts as its ligand in promoting motor axon targeting and neuronal survival in the central nervous system (CNS). Involved in synaptic targeting of ISNb/d motorneurons and also some SNa motorneurons. In larvae, involved in the negative regulation of the tracheal immune response to bacterial infection perhaps by acting as a ligand for the Toll-related receptor Tollo. May be involved in the normal development of specific neurons at the neuromuscular junction. This is Neurotrophin 1 from Drosophila melanogaster (Fruit fly).